The sequence spans 85 residues: U4-theraphotoxin-Hhn1a (85 aa).

The first 22 residues, 1–22, serve as a signal peptide directing secretion; sequence MKMTLIAILTCAAVLVLHTTAA. A propeptide spanning residues 23–48 is cleaved from the precursor; that stretch reads EELEAESQLMEVGMPDTELEAVDEER. 3 disulfides stabilise this stretch: cysteine 52–cysteine 66, cysteine 56–cysteine 77, and cysteine 71–cysteine 82.

It belongs to the neurotoxin 12 (Hwtx-2) family. 02 (Hwtx-2) subfamily. In terms of assembly, monomer. As to expression, expressed by the venom gland.

The protein resides in the secreted. In terms of biological role, neurotoxin active on both insects and mammals. The sequence is that of U4-theraphotoxin-Hhn1a from Cyriopagopus hainanus (Chinese bird spider).